Here is a 520-residue protein sequence, read N- to C-terminus: Protein OS-9 homolog (520 aa).

Residues 1 to 23 (MIRRIRTLTPLLVLACAGSGAWA) form the signal peptide. Over residues 121–135 (QVDNGNRDQTNGAES) the composition is skewed to polar residues. The segment at 121 to 144 (QVDNGNRDQTNGAESTSKEDEQRE) is disordered. The region spanning 161-302 (GKCMYYISGW…VIYTPRLCND (142 aa)) is the MRH domain. Residues C163 and C176 are joined by a disulfide bond. A mannooligosaccharide derivative is bound by residues W170, W171, Q183, D257, R263, E284, and Y290. Disulfide bonds link C256–C288 and C271–C300. Residues 442–520 (GLVGTVDSND…SEEIFFKDEL (79 aa)) form a disordered region. Positions 461–471 (GSISQPAQGTT) are enriched in polar residues. Basic and acidic residues predominate over residues 473-499 (DKGESNAETGEEKKKADEKIDHYEPEK). A Prevents secretion from ER motif is present at residues 517-520 (KDEL).

It belongs to the OS-9 family. As to quaternary structure, interacts with missfolded ER lumenal proteins.

It localises to the endoplasmic reticulum membrane. Functionally, lectin involved in the quality control of the secretory pathway. As a member of the endoplasmic reticulum-associated degradation lumenal (ERAD-L) surveillance system, targets misfolded endoplasmic reticulum lumenal glycoproteins for degradation. The polypeptide is Protein OS-9 homolog (yos9) (Aspergillus fumigatus (strain ATCC MYA-4609 / CBS 101355 / FGSC A1100 / Af293) (Neosartorya fumigata)).